An 820-amino-acid polypeptide reads, in one-letter code: MRYDPSLIEKKWQEFWKEHKSFEADEASDKPKYYVLDMFPYPSGAGLHVGHLIGYTATDIVARYKRAKGYAVLHPMGWDSFGLPAEQYAVRTGTHPRETTQKNIENFRKQLSAMGFSYDEGREFATSDPDYYRWTQKLFLFLYEKGLAYMADMAVNYCPELGTVLSNEEVENGLSVEGGYPVERRMLRQWILRITAYSDQLLEGLEDLDWPENVKQLQRNWIGKSEGALVRFEVNNERFLEVFTTRPDTIGGVSFLVVAPEHPEVNRLISENQREAVESYIRAAQSKSERDRISETKVKTGVFTGTYAKHPVTGADIPIWISDYVILGYGSGVVMGVPAHDERDREFAEAFSLPIYEVLDKDECCIHSNHGDFLLDGLAGQEARDYVIAYLQKKNLGEAKVAYKLRDWLFSRQRYWGEPIPIIHFEDGTCRPLEDDELPLLPPEIQDYRPEGFGQGPLAKVKEWVDIHDTKTNRRGRRETHTMPQWAGSCWYYLRFCDAHNSQAPWSNENERYWMPVDLYIGGAEHAVLHLLYSRFWHRVFYEAGMVSTAEPFKKLINQGLVLATSYRIPGKGYVYPEDAREDNGVWMSASGEELEVRQEKMSKSKLNGVDPQILIDEFGADALRMYAMFSGPLDKNKLWSNQGVSGCRRFLNRFYEMATSASVQDVDDPKGMALAHRLVHRVGEDIEKMSLNTIPSSFMEFINEFVKLDIYPRSALAMVVQALAPIAPHISEELWTVLGYAPGIDAAGWPKVDPKYLEDTSVTFVIQVNGKLRARLDMDKATSKEDVLSLAREAVAKYLEGKEVKKEVFVPNRLVNFVL.

The 'HIGH' region signature appears at 40–51 (PYPSGAGLHVGH). The short motif at 601–605 (KMSKS) is the 'KMSKS' region element. Lys604 is a binding site for ATP.

Belongs to the class-I aminoacyl-tRNA synthetase family.

It localises to the cytoplasm. The enzyme catalyses tRNA(Leu) + L-leucine + ATP = L-leucyl-tRNA(Leu) + AMP + diphosphate. In Chlamydia caviae (strain ATCC VR-813 / DSM 19441 / 03DC25 / GPIC) (Chlamydophila caviae), this protein is Leucine--tRNA ligase.